We begin with the raw amino-acid sequence, 317 residues long: Transmembrane and death domain protein 1 (317 aa).

The signal sequence occupies residues methionine 1–alanine 27. Residues methionine 28 to proline 218 lie on the Extracellular side of the membrane. Positions glutamate 62–arginine 73 are enriched in basic and acidic residues. Residues glutamate 62–valine 106 are disordered. Residues leucine 66–leucine 150 enclose the Death domain. Residue asparagine 78 is glycosylated (N-linked (GlcNAc...) asparagine). Residues leucine 219–leucine 239 form a helical membrane-spanning segment. Topologically, residues leucine 240 to leucine 317 are cytoplasmic.

It localises to the membrane. The sequence is that of Transmembrane and death domain protein 1 from Homo sapiens (Human).